The chain runs to 362 residues: Peptide chain release factor 1 (362 aa).

Gln240 carries the post-translational modification N5-methylglutamine.

The protein belongs to the prokaryotic/mitochondrial release factor family. Post-translationally, methylated by PrmC. Methylation increases the termination efficiency of RF1.

The protein resides in the cytoplasm. In terms of biological role, peptide chain release factor 1 directs the termination of translation in response to the peptide chain termination codons UAG and UAA. The polypeptide is Peptide chain release factor 1 (Bifidobacterium longum (strain DJO10A)).